A 149-amino-acid polypeptide reads, in one-letter code: MQSLQVKILDERMRDQLPSYGTPGSAGLDLRACIDEAIEIVPGQTVLVPTGLAIYVEDPRYAAFILPRSGLGHKHGIVLGNLVGLIDSDYQGQLMVSTWNRGSNPFKLEPMERLAQLVVMPIQQVELKVVEEFTESSRGAGGFGSTGRT.

Residues 68–70 (RSG), N81, 85–87 (LID), and M95 each bind substrate.

The protein belongs to the dUTPase family. Mg(2+) serves as cofactor.

The enzyme catalyses dUTP + H2O = dUMP + diphosphate + H(+). Its pathway is pyrimidine metabolism; dUMP biosynthesis; dUMP from dCTP (dUTP route): step 2/2. Functionally, this enzyme is involved in nucleotide metabolism: it produces dUMP, the immediate precursor of thymidine nucleotides and it decreases the intracellular concentration of dUTP so that uracil cannot be incorporated into DNA. The sequence is that of Deoxyuridine 5'-triphosphate nucleotidohydrolase from Polynucleobacter asymbioticus (strain DSM 18221 / CIP 109841 / QLW-P1DMWA-1) (Polynucleobacter necessarius subsp. asymbioticus).